The chain runs to 625 residues: Tumor necrosis factor receptor superfamily member 11A (625 aa).

The N-terminal stretch at 1–30 (MAPRARRRRQLPAPLLALCVLLVPLQVTLQ) is a signal peptide. Over 31–214 (VTPPCTQERH…PKEAQAYLPS (184 aa)) the chain is Extracellular. Cystine bridges form between Cys35/Cys47, Cys48/Cys61, Cys51/Cys69, Cys72/Cys87, Cys93/Cys113, Cys115/Cys128, Cys125/Cys127, Cys134/Cys152, and Cys155/Cys170. 4 TNFR-Cys repeats span residues 35–69 (CTQERHYEHLGRCCSRCEPGKYLSSKCTPTSDSVC), 72–113 (CGPD…PRRC), 115–152 (CTAGYHWNSDCECCRRNTECAPGFGAQHPLQLNKDTVC), and 155–195 (CLLG…DVVC). The N-linked (GlcNAc...) asparagine glycan is linked to Asn106. Na(+)-binding residues include Cys134, Ala135, Phe138, Ser161, and Val163. An N-linked (GlcNAc...) asparagine glycan is attached at Asn175. Residues Cys176 and Cys195 are joined by a disulfide bond. The helical transmembrane segment at 215-234 (LIVLLLFISVVVVAAIIFGV) threads the bilayer. Topologically, residues 235 to 625 (YYRKGGKALT…HTQGSGQCAE (391 aa)) are cytoplasmic. Disordered stretches follow at residues 331 to 356 (TQGDLSRKIPTEDEYTDRPSQPSTGS), 388 to 413 (GTESTVDSEGCDFTEPPSRTDSMPVS), and 479 to 524 (SMAE…FISS). Residues 499-511 (SGSSPSDQPPASG) show a composition bias toward low complexity. Over residues 512-524 (NVTGNSNSTFISS) the composition is skewed to polar residues. The segment at 532 to 537 (GDIIVV) is required for interaction with EEIG1 and osteoclast differentiation. The disordered stretch occupies residues 542 to 625 (TSQEGPGSAE…HTQGSGQCAE (84 aa)). Residues 543–558 (SQEGPGSAEPESEPVG) show a composition bias toward low complexity. The span at 561-571 (VQEETLAHRDS) shows a compositional bias: basic and acidic residues. Phosphoserine is present on Ser571. A compositionally biased stretch (polar residues) spans 603–625 (RPVQEQGGAQTSLHTQGSGQCAE).

As to quaternary structure, binds to the clefts between the subunits of the TNFSF11 ligand trimer to form a heterohexamer. Part of a complex composed of EEIG1, TNFRSF11A/RANK, PLCG2, GAB2, TEC and BTK; complex formation increases in the presence of TNFSF11/RANKL. Interacts with TRAF1, TRAF2, TRAF3, TRAF5 and TRAF6. Interacts (via cytoplasmic domain) with GAB2. Interacts (via cytoplasmic domain); with EEIG1 (via N-terminus); when in the presence of TNFSF11/RANKL. As to expression, ubiquitous expression with high levels in trabecular bone, thymus, small intestine, lung, brain and kidney. Weakly expressed in spleen and bone marrow.

It is found in the cell membrane. The protein resides in the membrane raft. In terms of biological role, receptor for TNFSF11/RANKL/TRANCE/OPGL; essential for RANKL-mediated osteoclastogenesis. Its interaction with EEIG1 promotes osteoclastogenesis via facilitating the transcription of NFATC1 and activation of PLCG2. Involved in the regulation of interactions between T-cells and dendritic cells. This is Tumor necrosis factor receptor superfamily member 11A (Tnfrsf11a) from Mus musculus (Mouse).